Reading from the N-terminus, the 101-residue chain is Putative septation protein SpoVG (101 aa).

The tract at residues 82 to 101 is disordered; sequence ELKKGGAAPARATGTDPHED.

This sequence belongs to the SpoVG family.

Could be involved in septation. The chain is Putative septation protein SpoVG from Anaeromyxobacter dehalogenans (strain 2CP-1 / ATCC BAA-258).